The sequence spans 943 residues: Isoleucine--tRNA ligase (943 aa).

The 'HIGH' region motif lies at 58–68; that stretch reads PYANGKIHIGH. Glutamate 567 contributes to the L-isoleucyl-5'-AMP binding site. Residues 608-612 carry the 'KMSKS' region motif; the sequence is KMSKS. An ATP-binding site is contributed by lysine 611. Residues cysteine 906, cysteine 909, cysteine 926, and cysteine 929 each contribute to the Zn(2+) site.

Belongs to the class-I aminoacyl-tRNA synthetase family. IleS type 1 subfamily. In terms of assembly, monomer. The cofactor is Zn(2+).

The protein resides in the cytoplasm. The catalysed reaction is tRNA(Ile) + L-isoleucine + ATP = L-isoleucyl-tRNA(Ile) + AMP + diphosphate. Its function is as follows. Catalyzes the attachment of isoleucine to tRNA(Ile). As IleRS can inadvertently accommodate and process structurally similar amino acids such as valine, to avoid such errors it has two additional distinct tRNA(Ile)-dependent editing activities. One activity is designated as 'pretransfer' editing and involves the hydrolysis of activated Val-AMP. The other activity is designated 'posttransfer' editing and involves deacylation of mischarged Val-tRNA(Ile). The sequence is that of Isoleucine--tRNA ligase from Pseudomonas putida (strain ATCC 47054 / DSM 6125 / CFBP 8728 / NCIMB 11950 / KT2440).